The primary structure comprises 266 residues: Outer membrane protein OmpK (266 aa).

A signal peptide spans 1–20 (MRKSLLALSLLAATSAPVLA).

It belongs to the nucleoside-specific channel-forming outer membrane porin (Tsx) (TC 1.B.10) family.

Its subcellular location is the cell outer membrane. Serves as receptor for a broad-host-range vibriophage, KVP40. This chain is Outer membrane protein OmpK (ompK), found in Vibrio parahaemolyticus serotype O3:K6 (strain RIMD 2210633).